The following is a 142-amino-acid chain: Large ribosomal subunit protein uL11 (142 aa).

This sequence belongs to the universal ribosomal protein uL11 family. Part of the ribosomal stalk of the 50S ribosomal subunit. Interacts with L10 and the large rRNA to form the base of the stalk. L10 forms an elongated spine to which L12 dimers bind in a sequential fashion forming a multimeric L10(L12)X complex. Post-translationally, one or more lysine residues are methylated.

In terms of biological role, forms part of the ribosomal stalk which helps the ribosome interact with GTP-bound translation factors. This chain is Large ribosomal subunit protein uL11, found in Desulforudis audaxviator (strain MP104C).